Consider the following 199-residue polypeptide: Carbon disulfide hydrolase (199 aa).

3 residues coordinate Zn(2+): Cys36, His91, and Cys94.

The protein belongs to the beta-class carbonic anhydrase family. In terms of assembly, exists as both octamers and hexadecamers in solution. The hexadecameric homooligomer may form a catenane, through interactions of two interlocked octameric rings. Zn(2+) serves as cofactor.

It catalyses the reaction carbon disulfide + 2 H2O = 2 hydrogen sulfide + CO2 + 2 H(+). The protein operates within sulfur metabolism; hydrogen sulfide biosynthesis. In terms of biological role, catalyzes the conversion of carbon disulfide into hydrogen sulfide and carbon dioxide, with carbonyl sulfide as an intermediate. Likely plays a key role in sulfur metabolism that allows A.thiooxidans G8 to grow on carbon disulfide as the main carbon and energy source. Does not show carbonic anhydrase activity (hydration of CO(2) to carbonate). In Acidithiobacillus thiooxidans (Thiobacillus thiooxidans), this protein is Carbon disulfide hydrolase.